The chain runs to 431 residues: Acyl transferase 8 (431 aa).

His169 serves as the catalytic Proton acceptor. Disordered regions lie at residues 220–247 (VADA…RAPA), 260–313 (HHAG…DHLR), and 331–400 (GLRV…PPPT). Over residues 224 to 234 (RGGVRPGVPRP) the composition is skewed to low complexity. The segment covering 264–273 (DGGGGGGGGR) has biased composition (gly residues). 2 stretches are compositionally biased toward basic residues: residues 297–306 (ERRRRRRRGR) and 335–380 (GRPR…RRLP). The segment covering 381–394 (QRHDAPRLITERAH) has biased composition (basic and acidic residues).

It belongs to the plant acyltransferase family.

In terms of biological role, involved in the incorporation of ferulate into the cell wall. May act as arabinoxylan feruloyl transferase. In Oryza sativa subsp. japonica (Rice), this protein is Acyl transferase 8.